Here is a 227-residue protein sequence, read N- to C-terminus: Lipoprotein-releasing system ATP-binding protein LolD (227 aa).

The ABC transporter domain maps to 6–227; that stretch reads LKIEGLRKTY…HLEDGVLVER (222 aa). 43 to 50 provides a ligand contact to ATP; the sequence is APSGAGKS.

This sequence belongs to the ABC transporter superfamily. Lipoprotein translocase (TC 3.A.1.125) family. As to quaternary structure, the complex is composed of two ATP-binding proteins (LolD) and two transmembrane proteins (LolC and LolE).

Its subcellular location is the cell inner membrane. In terms of biological role, part of the ABC transporter complex LolCDE involved in the translocation of mature outer membrane-directed lipoproteins, from the inner membrane to the periplasmic chaperone, LolA. Responsible for the formation of the LolA-lipoprotein complex in an ATP-dependent manner. In Ruegeria sp. (strain TM1040) (Silicibacter sp.), this protein is Lipoprotein-releasing system ATP-binding protein LolD.